Here is a 105-residue protein sequence, read N- to C-terminus: Thioredoxin (105 aa).

Residues V2–M105 form the Thioredoxin domain. Active-site nucleophile residues include C32 and C35. Cysteines 32 and 35 form a disulfide. An S-nitrosocysteine mark is found at C69 and C73.

Belongs to the thioredoxin family. May be nitrosylated on several cysteine residues, depending on the oxidation state. Nitrosylated Cys-73 may serve as donor for nitrosylation of target proteins.

The protein localises to the nucleus. The protein resides in the cytoplasm. Its subcellular location is the secreted. Functionally, participates in various redox reactions through the reversible oxidation of its active center dithiol to a disulfide and catalyzes dithiol-disulfide exchange reactions. Plays a role in the reversible S-nitrosylation of cysteine residues in target proteins, and thereby contributes to the response to intracellular nitric oxide. Nitrosylates the active site Cys of CASP3 in response to nitric oxide (NO), and thereby inhibits caspase-3 activity. Induces the FOS/JUN AP-1 DNA binding activity in ionizing radiation (IR) cells through its oxidation/reduction status and stimulates AP-1 transcriptional activity. This Ophiophagus hannah (King cobra) protein is Thioredoxin (TXN).